The sequence spans 516 residues: MSSWLSTTGKVYLPPAQPVARVLETDEYITGTSLYFHAGTERLLTVGHPYFPVKDVQEPHKVLVPKVSGSQFRVFRFNLPDPNRFALIDNGFYDSDHERLVWKLRGIEIGRGGPLGIGTTGHPLYNKFGDTENPNGYKKQSDDNRQDVSLDPKQTQMFIIGCTPAIGEHWDKAEPCPSPAPQQGDCPPIELVNSYIQDGDMCDIGFGAFNFKALQADKSSAPLDVIATVCKWPDFLKMGKDIYGDSLFFFGRREQLYARHFFVRAGTMGDALPEPFEATSDYFIGAQNQQDQYTLGPHIYVGTPSGSLVSSESQLFNRPYWLNRAQGTNNGICWDNQLFVTLVDNTHNTNFTISVKSDGANDNYQYKASDFKQYLRHIEEFEMEFIFQLCKVPLTADVMAHLNVMNPNILDNWQLNFVPPPPSGIEDQYRFLQSRATRCPTQTPATEKEDPYKDLSFWVVDLSERFSSELSQFSLGRRFLYQSGLINGSLKRKRIISSSHAQTNTKRSAKRKRSLK.

Disordered regions lie at residues 129–148 (GDTE…RQDV) and 497–516 (SSSH…RSLK). Residues 139-148 (KQSDDNRQDV) are compositionally biased toward basic and acidic residues. The segment covering 497–506 (SSSHAQTNTK) has biased composition (polar residues). The span at 507–516 (RSAKRKRSLK) shows a compositional bias: basic residues.

The protein belongs to the papillomaviridae L1 protein family. Self-assembles into homopentamers. The capsid has an icosahedral symmetry and consists of 72 capsomers, with each capsomer being a pentamer of L1. Interacts with the minor capsid protein L2; this interaction is necessary for viral genome encapsidation. Interacts with protein E2; this interaction enhances E2-dependent replication and transcription activation.

The protein localises to the virion. The protein resides in the host nucleus. Forms an icosahedral capsid with a T=7 symmetry and a 50 nm diameter. The capsid is composed of 72 pentamers linked to each other by disulfide bonds and associated with L2 proteins. Binds to heparan sulfate proteoglycans on cell surface of basal layer keratinocytes to provide initial virion attachment. This binding mediates a conformational change in the virus capsid that facilitates efficient infection. The virion enters the host cell via endocytosis. During virus trafficking, L1 protein dissociates from the viral DNA and the genomic DNA is released to the host nucleus. The virion assembly takes place within the cell nucleus. Encapsulates the genomic DNA together with protein L2. In Human papillomavirus 4, this protein is Major capsid protein L1.